Reading from the N-terminus, the 120-residue chain is Large ribosomal subunit protein bL20 (120 aa).

Belongs to the bacterial ribosomal protein bL20 family.

In terms of biological role, binds directly to 23S ribosomal RNA and is necessary for the in vitro assembly process of the 50S ribosomal subunit. It is not involved in the protein synthesizing functions of that subunit. In Desulfitobacterium hafniense (strain DSM 10664 / DCB-2), this protein is Large ribosomal subunit protein bL20.